A 459-amino-acid chain; its full sequence is Putrescine aminotransferase (459 aa).

Pyridoxal 5'-phosphate contacts are provided by residues 150-151 and Gln274; that span reads GT. Lys300 carries the N6-(pyridoxal phosphate)lysine modification. Residue Thr332 coordinates pyridoxal 5'-phosphate.

Belongs to the class-III pyridoxal-phosphate-dependent aminotransferase family. Putrescine aminotransferase subfamily. Pyridoxal 5'-phosphate is required as a cofactor.

It carries out the reaction an alkane-alpha,omega-diamine + 2-oxoglutarate = an omega-aminoaldehyde + L-glutamate. The enzyme catalyses putrescine + 2-oxoglutarate = 1-pyrroline + L-glutamate + H2O. It catalyses the reaction cadaverine + 2-oxoglutarate = 5-aminopentanal + L-glutamate. It functions in the pathway amine and polyamine degradation; putrescine degradation; 4-aminobutanal from putrescine (transaminase route): step 1/1. Catalyzes the aminotransferase reaction from putrescine to 2-oxoglutarate, leading to glutamate and 4-aminobutanal, which spontaneously cyclizes to form 1-pyrroline. This is the first step in one of two pathways for putrescine degradation, where putrescine is converted into 4-aminobutanoate (gamma-aminobutyrate or GABA) via 4-aminobutanal. Also functions as a cadaverine transaminase in a a L-lysine degradation pathway to succinate that proceeds via cadaverine, glutarate and L-2-hydroxyglutarate. The chain is Putrescine aminotransferase from Salmonella dublin (strain CT_02021853).